The primary structure comprises 783 residues: Heat shock transcription factor (783 aa).

Residues 1 to 59 form a disordered region; it reads MTTNLYAIAGPSKPTTPTSTPSPRSEPPSPLKSLTSLPTNPLNSHGTSTPNTLTNQLSS. Composition is skewed to low complexity over residues 11–23 and 31–42; these read PSKPTTPTSTPSP and LKSLTSLPTNPL. The span at 43–59 shows a compositional bias: polar residues; that stretch reads NSHGTSTPNTLTNQLSS. A DNA-binding region spans residues 78 to 168; that stretch reads MKVPAFLNKL…PIELWEFANP (91 aa). Positions 181–262 are disordered; the sequence is VTRKNNRPSN…PGSVPPSHTS (82 aa). Composition is skewed to low complexity over residues 189-199 and 209-233; these read SNSGVGPSSSV and STRSASAAAASGSASGQIQQAISQG. Residues 238 to 262 are compositionally biased toward polar residues; it reads NHSTSGKYLITDGTTPGSVPPSHTS. The interval 280 to 333 is involved in trimerization; it reads GIAAIRQTQASIATDLRKLQASNEALWRQAYETQEKQRKHEETIDLIVSFLERL. 2 stretches are compositionally biased toward basic and acidic residues: residues 350 to 372 and 399 to 415; these read RGVGVRRDRDGREGRDSRDSRFA and TGEHGEIESPTSDDRLV. Disordered stretches follow at residues 350 to 554, 599 to 652, and 736 to 783; these read RGVG…LLSP, QALA…TLAL, and QGLA…KSES. Residues 418–448 are compositionally biased toward polar residues; that stretch reads GSNSEYSIPSVKRTSSSSHPISLGQLGSSRF. 4 stretches are compositionally biased toward low complexity: residues 452–467, 497–511, 522–550, and 616–632; these read PSEDPSPSASGPGSTS, LSPLSDTDPLLPSSS, PFPSSNSNQSNSFNPSNPSSAWASNPSQP, and NPNGNASTSASASAHGM. Residues 742-752 are compositionally biased toward acidic residues; the sequence is GEEEGEREVEG. Over residues 753–765 the composition is skewed to gly residues; that stretch reads DGGVSSSGAGAGA.

Belongs to the HSF family. In terms of assembly, homotrimer. Homotrimerization increases the affinity of HSF1 to DNA. Interacts with transcriptional coregulator SSA1 on chromatin.

It is found in the nucleus. Functionally, DNA-binding transcription factor that specifically binds heat shock promoter elements (HSE) and activates transcription. Together with its coregulator SSA1, activates expression of laccase LAC1 during glucose starvation. The chain is Heat shock transcription factor from Cryptococcus neoformans var. neoformans serotype D (strain JEC21 / ATCC MYA-565) (Filobasidiella neoformans).